The following is a 329-amino-acid chain: 4-hydroxythreonine-4-phosphate dehydrogenase (329 aa).

Residues H136 and T137 each coordinate substrate. H166, H211, and H266 together coordinate a divalent metal cation. Substrate-binding residues include K274, N283, and R292.

It belongs to the PdxA family. In terms of assembly, homodimer. It depends on Zn(2+) as a cofactor. Mg(2+) is required as a cofactor. The cofactor is Co(2+).

The protein resides in the cytoplasm. The catalysed reaction is 4-(phosphooxy)-L-threonine + NAD(+) = 3-amino-2-oxopropyl phosphate + CO2 + NADH. It participates in cofactor biosynthesis; pyridoxine 5'-phosphate biosynthesis; pyridoxine 5'-phosphate from D-erythrose 4-phosphate: step 4/5. Functionally, catalyzes the NAD(P)-dependent oxidation of 4-(phosphooxy)-L-threonine (HTP) into 2-amino-3-oxo-4-(phosphooxy)butyric acid which spontaneously decarboxylates to form 3-amino-2-oxopropyl phosphate (AHAP). The chain is 4-hydroxythreonine-4-phosphate dehydrogenase from Shigella sonnei (strain Ss046).